The chain runs to 880 residues: Alanine--tRNA ligase (880 aa).

Belongs to the class-II aminoacyl-tRNA synthetase family.

It localises to the cytoplasm. It carries out the reaction tRNA(Ala) + L-alanine + ATP = L-alanyl-tRNA(Ala) + AMP + diphosphate. Catalyzes the attachment of alanine to tRNA(Ala) in a two-step reaction: alanine is first activated by ATP to form Ala-AMP and then transferred to the acceptor end of tRNA(Ala). Also edits incorrectly charged Ser-tRNA(Ala) and Gly-tRNA(Ala) via its editing domain. The polypeptide is Alanine--tRNA ligase (alaS) (Lactiplantibacillus plantarum (strain ATCC BAA-793 / NCIMB 8826 / WCFS1) (Lactobacillus plantarum)).